Consider the following 92-residue polypeptide: cAMP-dependent protein kinase inhibitor beta (92 aa).

The tract at residues 1 to 26 is disordered; the sequence is MGGGTSPEAQQDSVMRTDSSEMTDVE. Residues 7-26 show a composition bias toward polar residues; it reads PEAQQDSVMRTDSSEMTDVE. A Phosphoserine modification is found at Ser-56. The segment covering 70-82 has biased composition (basic and acidic residues); it reads EDAKTKNEEKDQG. The tract at residues 70-92 is disordered; that stretch reads EDAKTKNEEKDQGQPKTPLNEGK.

Belongs to the PKI family.

Its function is as follows. Extremely potent competitive inhibitor of cAMP-dependent protein kinase activity, this protein interacts with the catalytic subunit of the enzyme after the cAMP-induced dissociation of its regulatory chains. In Mus musculus (Mouse), this protein is cAMP-dependent protein kinase inhibitor beta (Pkib).